Here is a 663-residue protein sequence, read N- to C-terminus: Bifunctional polymyxin resistance protein ArnA (663 aa).

A formyltransferase ArnAFT region spans residues 1-307; that stretch reads MSPKAVVFAY…EFGLVEGSQL (307 aa). The Proton donor; for formyltransferase activity role is filled by H106. Residues R116 and 138-142 each bind (6R)-10-formyltetrahydrofolate; that span reads VKRAD. The interval 317 to 663 is dehydrogenase ArnADH; that stretch reads RRTRVLILGV…EAMAEKADMR (347 aa). NAD(+) is bound by residues D350 and 371–372; that span reads DI. Residues A396, Y401, and 435–436 each bind UDP-alpha-D-glucuronate; that span reads TS. E437 functions as the Proton acceptor; for decarboxylase activity in the catalytic mechanism. Residues R463, N494, 528 to 537, and Y615 contribute to the UDP-alpha-D-glucuronate site; that span reads RLVDGGAQKR. The Proton donor; for decarboxylase activity role is filled by R621.

It in the N-terminal section; belongs to the Fmt family. UDP-L-Ara4N formyltransferase subfamily. The protein in the C-terminal section; belongs to the NAD(P)-dependent epimerase/dehydratase family. UDP-glucuronic acid decarboxylase subfamily. Homohexamer, formed by a dimer of trimers.

It carries out the reaction UDP-alpha-D-glucuronate + NAD(+) = UDP-beta-L-threo-pentopyranos-4-ulose + CO2 + NADH. The enzyme catalyses UDP-4-amino-4-deoxy-beta-L-arabinose + (6R)-10-formyltetrahydrofolate = UDP-4-deoxy-4-formamido-beta-L-arabinose + (6S)-5,6,7,8-tetrahydrofolate + H(+). It participates in nucleotide-sugar biosynthesis; UDP-4-deoxy-4-formamido-beta-L-arabinose biosynthesis; UDP-4-deoxy-4-formamido-beta-L-arabinose from UDP-alpha-D-glucuronate: step 1/3. The protein operates within nucleotide-sugar biosynthesis; UDP-4-deoxy-4-formamido-beta-L-arabinose biosynthesis; UDP-4-deoxy-4-formamido-beta-L-arabinose from UDP-alpha-D-glucuronate: step 3/3. It functions in the pathway bacterial outer membrane biogenesis; lipopolysaccharide biosynthesis. Bifunctional enzyme that catalyzes the oxidative decarboxylation of UDP-glucuronic acid (UDP-GlcUA) to UDP-4-keto-arabinose (UDP-Ara4O) and the addition of a formyl group to UDP-4-amino-4-deoxy-L-arabinose (UDP-L-Ara4N) to form UDP-L-4-formamido-arabinose (UDP-L-Ara4FN). The modified arabinose is attached to lipid A and is required for resistance to polymyxin and cationic antimicrobial peptides. This Pseudomonas savastanoi pv. phaseolicola (strain 1448A / Race 6) (Pseudomonas syringae pv. phaseolicola (strain 1448A / Race 6)) protein is Bifunctional polymyxin resistance protein ArnA.